The sequence spans 318 residues: uncharacterized protein (318 aa).

This is an uncharacterized protein from Autographa californica nuclear polyhedrosis virus (AcMNPV).